We begin with the raw amino-acid sequence, 286 residues long: Shikimate dehydrogenase (NADP(+)) (286 aa).

Residues 20–22 (SLS) and Thr67 contribute to the shikimate site. Catalysis depends on Lys71, which acts as the Proton acceptor. 2 residues coordinate shikimate: Asn92 and Asp107. NADP(+)-binding positions include 132–136 (GAGGA) and Met228. Tyr230 lines the shikimate pocket. Position 251 (Gly251) interacts with NADP(+).

This sequence belongs to the shikimate dehydrogenase family. In terms of assembly, homodimer.

It carries out the reaction shikimate + NADP(+) = 3-dehydroshikimate + NADPH + H(+). Its pathway is metabolic intermediate biosynthesis; chorismate biosynthesis; chorismate from D-erythrose 4-phosphate and phosphoenolpyruvate: step 4/7. Its function is as follows. Involved in the biosynthesis of the chorismate, which leads to the biosynthesis of aromatic amino acids. Catalyzes the reversible NADPH linked reduction of 3-dehydroshikimate (DHSA) to yield shikimate (SA). The protein is Shikimate dehydrogenase (NADP(+)) of Geobacter sulfurreducens (strain ATCC 51573 / DSM 12127 / PCA).